The chain runs to 202 residues: ATP-dependent Clp protease proteolytic subunit (202 aa).

Ser-106 acts as the Nucleophile in catalysis. His-131 is a catalytic residue.

The protein belongs to the peptidase S14 family. Fourteen ClpP subunits assemble into 2 heptameric rings which stack back to back to give a disk-like structure with a central cavity, resembling the structure of eukaryotic proteasomes.

The protein resides in the cytoplasm. It catalyses the reaction Hydrolysis of proteins to small peptides in the presence of ATP and magnesium. alpha-casein is the usual test substrate. In the absence of ATP, only oligopeptides shorter than five residues are hydrolyzed (such as succinyl-Leu-Tyr-|-NHMec, and Leu-Tyr-Leu-|-Tyr-Trp, in which cleavage of the -Tyr-|-Leu- and -Tyr-|-Trp bonds also occurs).. Its function is as follows. Cleaves peptides in various proteins in a process that requires ATP hydrolysis. Has a chymotrypsin-like activity. Plays a major role in the degradation of misfolded proteins. The protein is ATP-dependent Clp protease proteolytic subunit of Variovorax paradoxus (strain S110).